The primary structure comprises 575 residues: Muellerian-inhibiting factor (575 aa).

The signal sequence occupies residues M1–A20. The propeptide occupies G21–R466. N78 and N343 each carry an N-linked (GlcNAc...) asparagine glycan. 3 disulfides stabilise this stretch: C477–C541, C503–C572, and C507–C574.

It belongs to the TGF-beta family. Homodimer; disulfide-linked. Preproprotein is proteolytically processed to generate N- and C-terminal cleavage products that homodimerize and associate to form a biologically active non-covalent complex. Binding of the non-covalent complex to AMHR2 induces dissociation of the pro-region from the mature C-terminal dimer. The N-terminal portion of the protein, despite having no intrinsic activity, has the role of amplifying the activity of the C-terminus. Detected in fetal Sertoli cells. Expressed in granulosa cells of growing follicles but also in theca cells of preovulatory follicles and corpora lutea (at protein level).

It localises to the secreted. Its function is as follows. Plays an important role in several reproductive functions. Induces Muellerian duct regression during male fetal sexual differentiation and plays a role in Leydig cell differentiation and function. In female acts as a negative regulator of the primordial to primary follicle transition and decreases FSH sensitivity of growing follicles. AMH signals by binding to a specific type-II receptor, AMHR2, that heterodimerizes with type-I receptors (ACVR1 and BMPR1A), and recruiting SMAD proteins that are translocated to the nucleus to regulate target gene expression. The polypeptide is Muellerian-inhibiting factor (AMH) (Sus scrofa (Pig)).